The sequence spans 215 residues: Cytochrome b6 (215 aa).

Residues 32–52 (IFYCLGGITFTSFLVQVATGF) form a helical membrane-spanning segment. Cys-35 lines the heme c pocket. The heme b site is built by His-86 and His-100. 3 helical membrane-spanning segments follow: residues 90–110 (ASMMVMMMILHVFRVYLTGGF), 116–136 (LTWVTGVIMAVCTVSFGVTGY), and 186–206 (LHTFVLPLATAVFMLAHFLMI). Heme b contacts are provided by His-187 and His-202.

The protein belongs to the cytochrome b family. PetB subfamily. In terms of assembly, the 4 large subunits of the cytochrome b6-f complex are cytochrome b6, subunit IV (17 kDa polypeptide, PetD), cytochrome f and the Rieske protein, while the 4 small subunits are PetG, PetL, PetM and PetN. The complex functions as a dimer. It depends on heme b as a cofactor. Requires heme c as cofactor.

Its subcellular location is the plastid. It localises to the chloroplast thylakoid membrane. Component of the cytochrome b6-f complex, which mediates electron transfer between photosystem II (PSII) and photosystem I (PSI), cyclic electron flow around PSI, and state transitions. The polypeptide is Cytochrome b6 (Oltmannsiellopsis viridis (Marine flagellate)).